Here is an 810-residue protein sequence, read N- to C-terminus: Plasminogen (810 aa).

Residues 1-19 form the signal peptide; it reads MQRKELVLLFLLFLQPGHG. The PAN domain occupies 20-98; that stretch reads IPLDDYVTTQ…RDVILFEKKM (79 aa). Disulfide bonds link cysteine 49–cysteine 73, cysteine 53–cysteine 61, cysteine 103–cysteine 181, cysteine 124–cysteine 164, cysteine 152–cysteine 176, cysteine 185–cysteine 262, cysteine 188–cysteine 316, cysteine 206–cysteine 245, cysteine 234–cysteine 257, cysteine 275–cysteine 352, cysteine 296–cysteine 335, cysteine 324–cysteine 347, cysteine 379–cysteine 456, cysteine 400–cysteine 439, cysteine 428–cysteine 451, cysteine 482–cysteine 561, cysteine 503–cysteine 544, cysteine 532–cysteine 556, cysteine 569–cysteine 685, cysteine 579–cysteine 586, cysteine 607–cysteine 623, cysteine 699–cysteine 766, cysteine 729–cysteine 745, and cysteine 756–cysteine 784. 5 Kringle domains span residues 103-181, 185-262, 275-352, 379-456, and 482-561; these read CKVG…IIQC, CMHC…IPRC, CLMG…IPDC, CYQG…LKKC, and CIID…IPHC. Residue asparagine 339 is glycosylated (N-linked (GlcNAc...) asparagine). A disordered region spans residues 398 to 418; the sequence is KKCQPWTSMRPHRHSKTPENY. The 227-residue stretch at 582–808 folds into the Peptidase S1 domain; the sequence is RVGGCVAHPH…YVSWLQDVMR (227 aa). The residue at position 598 (serine 598) is a Phosphoserine. Catalysis depends on charge relay system residues histidine 622 and aspartate 665. The active-site Charge relay system is the serine 760.

Belongs to the peptidase S1 family. Plasminogen subfamily. Interacts with CSPG4 and AMOT. Interacts (via the Kringle domains) with HRG; the interaction tethers PLG to the cell surface and enhances its activation. Interacts (via Kringle 4 domain) with ADA; the interaction stimulates PLG activation when in complex with DPP4. Angiostatin: Interacts with ATP5F1A; the interaction inhibits most of the angiogenic effects of angiostatin. In terms of processing, in the presence of the inhibitor, the activation involves only cleavage after Arg-582, yielding two chains held together by two disulfide bonds. In the absence of the inhibitor, the activation involves additionally the removal of the activation peptide.

The protein localises to the secreted. It catalyses the reaction Preferential cleavage: Lys-|-Xaa &gt; Arg-|-Xaa, higher selectivity than trypsin. Converts fibrin into soluble products.. With respect to regulation, converted into plasmin by plasminogen activators, both plasminogen and its activator being bound to fibrin. Cannot be activated with streptokinase. Functionally, plasmin dissolves the fibrin of blood clots and acts as a proteolytic factor in a variety of other processes including embryonic development, tissue remodeling, tumor invasion, and inflammation. In ovulation, weakens the walls of the Graafian follicle. It activates the urokinase-type plasminogen activator, collagenases and several complement zymogens, such as C1, C4 and C5. Cleavage of fibronectin and laminin leads to cell detachment and apoptosis. Also cleaves fibrin, thrombospondin and von Willebrand factor. Its role in tissue remodeling and tumor invasion may be modulated by CSPG4. Binds to cells. The protein is Plasminogen (PLG) of Erinaceus europaeus (Western European hedgehog).